Reading from the N-terminus, the 409-residue chain is DNA primase DnaG (409 aa).

The region spanning 175–261 (DAIIVVEGRA…EVEELTRKEI (87 aa)) is the Toprim domain. Mg(2+)-binding residues include E181, D223, and D225. A compositionally biased stretch (basic and acidic residues) spans 280–289 (ERPKDKEREK). Residues 280-322 (ERPKDKEREKGKKPKPKKRPERRGRPRKKKARPKRGPQERRLL) form a disordered region. Basic residues predominate over residues 290-314 (GKKPKPKKRPERRGRPRKKKARPKR).

The protein belongs to the archaeal DnaG primase family. Forms a ternary complex with MCM helicase and DNA. Component of the archaeal exosome complex. Mg(2+) serves as cofactor.

The catalysed reaction is ssDNA + n NTP = ssDNA/pppN(pN)n-1 hybrid + (n-1) diphosphate.. In terms of biological role, RNA polymerase that catalyzes the synthesis of short RNA molecules used as primers for DNA polymerase during DNA replication. Also part of the exosome, which is a complex involved in RNA degradation. Acts as a poly(A)-binding protein that enhances the interaction between heteromeric, adenine-rich transcripts and the exosome. The polypeptide is DNA primase DnaG (Methanopyrus kandleri (strain AV19 / DSM 6324 / JCM 9639 / NBRC 100938)).